The primary structure comprises 127 residues: Putative truncated L-serine dehydratase YIL168W (127 aa).

Lysine 39 is subject to N6-(pyridoxal phosphate)lysine.

It belongs to the serine/threonine dehydratase family. It depends on pyridoxal 5'-phosphate as a cofactor.

It localises to the cytoplasm. It catalyses the reaction L-serine = pyruvate + NH4(+). It functions in the pathway carbohydrate biosynthesis; gluconeogenesis. This is Putative truncated L-serine dehydratase YIL168W from Saccharomyces cerevisiae (strain ATCC 204508 / S288c) (Baker's yeast).